The primary structure comprises 2282 residues: Protein Ycf2 (2282 aa).

Residue 1637–1644 participates in ATP binding; the sequence is GSIGTGRS.

This sequence belongs to the Ycf2 family.

The protein resides in the plastid. The protein localises to the chloroplast stroma. In terms of biological role, probable ATPase of unknown function. Its presence in a non-photosynthetic plant (Epifagus virginiana) and experiments in tobacco indicate that it has an essential function which is probably not related to photosynthesis. The sequence is that of Protein Ycf2 from Citrus sinensis (Sweet orange).